Here is a 161-residue protein sequence, read N- to C-terminus: Ribonuclease H (161 aa).

The region spanning 12–155 (QPQHVVIYTD…ADALANKGVE (144 aa)) is the RNase H type-1 domain. 4 residues coordinate Mg(2+): aspartate 21, glutamate 59, aspartate 81, and aspartate 147.

It belongs to the RNase H family. As to quaternary structure, monomer. The cofactor is Mg(2+).

Its subcellular location is the cytoplasm. The catalysed reaction is Endonucleolytic cleavage to 5'-phosphomonoester.. Functionally, endonuclease that specifically degrades the RNA of RNA-DNA hybrids. This Polaromonas naphthalenivorans (strain CJ2) protein is Ribonuclease H.